Consider the following 443-residue polypeptide: 26S proteasome regulatory subunit 4 homolog A (443 aa).

Disordered stretches follow at residues methionine 1–valine 55 and arginine 87–threonine 108. Basic and acidic residues-rich tracts occupy residues glutamine 12–glutamate 28 and arginine 87–arginine 106. Glycine 229–threonine 236 is a binding site for ATP. Residues lysine 296 and lysine 433 each participate in a glycyl lysine isopeptide (Lys-Gly) (interchain with G-Cter in ubiquitin) cross-link.

Belongs to the AAA ATPase family. Component of the 19S regulatory particle (RP/PA700) base subcomplex of the 26S proteasome. The 26S proteasome is composed of a core protease (CP), known as the 20S proteasome, capped at one or both ends by the 19S regulatory particle (RP/PA700). The RP/PA700 complex is composed of at least 17 different subunits in two subcomplexes, the base and the lid, which form the portions proximal and distal to the 20S proteolytic core, respectively. Required for innate immunity. Interacts with UNI. In terms of tissue distribution, preferentially expressed in the root and shoot apical meristem.

Its subcellular location is the cytoplasm. The protein localises to the P-body. It is found in the nucleus. Functionally, the 26S protease is involved in the ATP-dependent degradation of ubiquitinated proteins. The regulatory (or ATPase) complex confers ATP dependency and substrate specificity to the 26S complex. Interacts with transit peptides of proteins targeted to the chloroplast, and may be involved in the degradation of unimported plastid protein precursors. Is required for the maintenance of postembryonic root and shoot meristems. Has a specific role in the regulation of organs size. Acts redundantly with RPT2B in the regulation of gametogenesis. With RPT2B plays a critical role in 26S proteasome assembly. Acts as an upstream signaling component for inducing both defense and morphological phenotypes in the constitutive active uni-1D mutant. Acts as a negative regulator of endoreduplication in trichome cells. May function after the completion of the third endoreduplication step (8C to 16C) mediated by RHL1. Acts as a negative regulator of transcriptional gene silencing (TGS) at specific endogenous genes through DNA methylation. Promotes post-transcriptional gene silencing (PTGS) by limiting the degradation of transgene aberrant RNAs by the RNA quality control (RQC) machinery, thus favoring their entry into cytoplasmic siRNA bodies where they can trigger PTGS. Involved in tolerance to zinc deficiency, possibly through alleviation of oxidative stresses or processing of poly-ubiquitinated proteins. Required for resistance to the fungal pathogen Golovinomyces cichoracearum. This is 26S proteasome regulatory subunit 4 homolog A from Arabidopsis thaliana (Mouse-ear cress).